We begin with the raw amino-acid sequence, 768 residues long: ATP-dependent RNA helicase DBP4 (768 aa).

A Q motif motif is present at residues Val41–Arg69. Residues Ile72 to Ile246 enclose the Helicase ATP-binding domain. Ala85–Thr92 provides a ligand contact to ATP. Positions Asp194 to Asp197 match the DEAD box motif. A Helicase C-terminal domain is found at Lys280–Leu439. Disordered stretches follow at residues Glu581–Ala612 and Lys653–Thr754. A compositionally biased stretch (basic and acidic residues) spans Lys653 to Val666. Over residues Ala667–Arg678 the composition is skewed to basic residues. Positions Asp711–Glu721 are enriched in acidic residues.

Belongs to the DEAD box helicase family. DDX10/DBP4 subfamily. As to quaternary structure, interacts with the U3 and U14 snoRNAs. Associates with pre-ribosomal complexes.

It is found in the nucleus. Its subcellular location is the nucleolus. The catalysed reaction is ATP + H2O = ADP + phosphate + H(+). ATP-dependent RNA helicase required for ribosome biogenesis. Involved in the release of U14 snoRNA in pre-ribosomal complexes. Required for pre-rRNA cleavage at site A2. The polypeptide is ATP-dependent RNA helicase DBP4 (DBP4) (Vanderwaltozyma polyspora (strain ATCC 22028 / DSM 70294 / BCRC 21397 / CBS 2163 / NBRC 10782 / NRRL Y-8283 / UCD 57-17) (Kluyveromyces polysporus)).